The chain runs to 338 residues: Glycerol-3-phosphate dehydrogenase [NAD(P)+] (338 aa).

The NADPH site is built by tryptophan 11, arginine 30, and lysine 109. Positions 109, 143, and 145 each coordinate sn-glycerol 3-phosphate. NADPH is bound at residue alanine 147. Residues lysine 198, aspartate 251, serine 261, arginine 262, and asparagine 263 each coordinate sn-glycerol 3-phosphate. Lysine 198 acts as the Proton acceptor in catalysis. Arginine 262 contacts NADPH. Valine 286 and glutamate 288 together coordinate NADPH.

It belongs to the NAD-dependent glycerol-3-phosphate dehydrogenase family.

It localises to the cytoplasm. It carries out the reaction sn-glycerol 3-phosphate + NAD(+) = dihydroxyacetone phosphate + NADH + H(+). It catalyses the reaction sn-glycerol 3-phosphate + NADP(+) = dihydroxyacetone phosphate + NADPH + H(+). The protein operates within membrane lipid metabolism; glycerophospholipid metabolism. Catalyzes the reduction of the glycolytic intermediate dihydroxyacetone phosphate (DHAP) to sn-glycerol 3-phosphate (G3P), the key precursor for phospholipid synthesis. In Cupriavidus necator (strain ATCC 17699 / DSM 428 / KCTC 22496 / NCIMB 10442 / H16 / Stanier 337) (Ralstonia eutropha), this protein is Glycerol-3-phosphate dehydrogenase [NAD(P)+].